A 282-amino-acid polypeptide reads, in one-letter code: Protein GAM-1 (282 aa).

The BC-box-like motif lies at 251 to 260 (SLQDWARLGV).

Interacts with host HDAC1. Interacts with host E1-activating enzyme (SAE1/UBA2 heterodimer). Interacts with host retinoblastoma protein. Seems to form a complex with host E4F1 and HDAC1. Seems to form complexes with either CUL2-elongin BC complex-RBX1 or CUL5-elongin BC complex-RBX1. Interacts with TCEB1/Elongin-C, CUL2 and CUL5 in vitro.

The protein resides in the host nucleus. Functionally, early protein essential for viral replication. Strong and global transcriptional activator of both viral and cellular genes. Activates transcription by blocking host retinoblastoma protein (RB) and inhibiting the SUMO pathway. Inhibition of host RB leads to the activation of E2F1-dependent transcription and, in particular, of E2F1-regulated S-phase genes. Stimulation of progression from G1 to S phase allows the virus to efficiently use the cellular DNA replicating machinery to achieve viral genome replication. Blocks the SUMO pathway by targeting the E1 enzyme (SAE1/UBA2 heterodimer) to the ubiquitin-proteasome machinery. Mediates SAE1 degradation possibly through the formation of complexes with either CUL2-elongin BC complex-RBX1 or CUL5-elongin BC complex-RBX1. The degradation of UBA2 is probably a consequent effect of SAE1 disappearance. Inhibits HDAC1 sumoylation, thereby interfering with histone deacetylation mediated by HDAC1, leading to activation of transcription. Mediates induction of heat-shock response. Seems to have an antiapoptotic function. This Galliformes (FAdV-1) protein is Protein GAM-1.